The following is a 280-amino-acid chain: MPRDLSRSRSPSPSPSRRRKHSRSPVRQRHSRRSRRDRSPSPYSSHSYSRRKSRSISPRRHRSRSVTPKRRSPTPKRYKRQKSRSSTPSPAKRSPAATLESAKNRNGEKLKREEEERKRRQREAELKLIEEETVKRVEEAIRKKVEESLQSEKIKMEILTLLEEGRKRLNEEVAAQLEEEKEASLIEAKEKEEREQQEKEERERIAEENLKRVEEAQRKEAMERQRKEEERYRELEELQRQKEEAMRRKKAEEEEERLKQMKLLGKNKSRPKLSFALSSK.

2 disordered regions span residues 1–124 (MPRD…QREA) and 177–280 (LEEE…LSSK). Composition is skewed to basic residues over residues 16–36 (SRRRKHSRSPVRQRHSRRSRR) and 48–83 (YSRRKSRSISPRRHRSRSVTPKRRSPTPKRYKRQKS). 2 stretches are compositionally biased toward basic and acidic residues: residues 102 to 124 (AKNRNGEKLKREEEERKRRQREA) and 182 to 259 (EASL…ERLK).

This is an uncharacterized protein from Arabidopsis thaliana (Mouse-ear cress).